The following is a 555-amino-acid chain: Hydroxylamine reductase (555 aa).

[4Fe-4S] cluster-binding residues include Cys3, Cys6, Cys18, and Cys25. 8 residues coordinate hybrid [4Fe-2O-2S] cluster: His252, Glu276, Cys320, Cys407, Cys435, Cys460, Glu494, and Lys496. The residue at position 407 (Cys407) is a Cysteine persulfide.

This sequence belongs to the HCP family. It depends on [4Fe-4S] cluster as a cofactor. Requires hybrid [4Fe-2O-2S] cluster as cofactor.

The protein resides in the cytoplasm. The enzyme catalyses A + NH4(+) + H2O = hydroxylamine + AH2 + H(+). Its function is as follows. Catalyzes the reduction of hydroxylamine to form NH(3) and H(2)O. The protein is Hydroxylamine reductase of Burkholderia ambifaria (strain MC40-6).